Here is a 608-residue protein sequence, read N- to C-terminus: Dextranase (608 aa).

Residues 1–19 (MATMLKLLALTLAISESAI) form the signal peptide. A propeptide spanning residues 20 to 34 (GAVMHPPGNSHPGTH) is cleaved from the precursor. 3 N-linked (GlcNAc...) asparagine glycosylation sites follow: N39, N571, and N574.

The protein belongs to the glycosyl hydrolase 49 family. In terms of processing, N-glycosylated.

The protein resides in the secreted. The catalysed reaction is Endohydrolysis of (1-&gt;6)-alpha-D-glucosidic linkages in dextran.. This is Dextranase (DEX) from Talaromyces minioluteus (Filamentous fungus).